A 773-amino-acid polypeptide reads, in one-letter code: ATP-dependent zinc metalloprotease YME1L1 (773 aa).

Residues 1-295 (MFSLSSTVQP…TNDSLRRTRL (295 aa)) lie on the Mitochondrial matrix side of the membrane. The helical transmembrane segment at 296–316 (ILFVLLLFGIYGLLKNPFLSV) threads the bilayer. The Mitochondrial intermembrane portion of the chain corresponds to 317 to 773 (RFRTTTGLDS…VLEGKKLEVR (457 aa)). ATP is bound by residues Val341, Thr383, Gly384, Lys385, Thr386, and Leu387. Residue His599 coordinates Zn(2+). Residue Glu600 is part of the active site. Residues His603 and Asp677 each coordinate Zn(2+).

The protein in the N-terminal section; belongs to the AAA ATPase family. It in the C-terminal section; belongs to the peptidase M41 family. Homohexamer; may also form heterohexamers. Exists in several complexes of 600-1100 kDa. Interacts with AFG1L. It depends on Zn(2+) as a cofactor. Proteolytically processed by mitochondrial processing peptidase (MPP) to generate the mature form. Degraded in an OMA1-dependent manner in response to oxidative stress. In terms of tissue distribution, high expression in cardiac and skeletal muscle mitochondria.

The protein resides in the mitochondrion inner membrane. It is found in the mitochondrion. It carries out the reaction ATP + H2O = ADP + phosphate + H(+). Its function is as follows. ATP-dependent metalloprotease that catalyzes the degradation of folded and unfolded proteins with a suitable degron sequence in the mitochondrial intermembrane region. Plays an important role in regulating mitochondrial morphology and function by cleaving OPA1 at position S2, giving rise to a form of OPA1 that promotes maintenance of normal mitochondrial structure and mitochondrial protein metabolism. Ensures cell proliferation, maintains normal cristae morphology and complex I respiration activity, promotes antiapoptotic activity and protects mitochondria from the accumulation of oxidatively damaged membrane proteins. Required to control the accumulation of nonassembled respiratory chain subunits (NDUFB6, OX4 and ND1). Involved in the mitochondrial adaptation in response to various signals, such as stress or developmental cues, by mediating degradation of mitochondrial proteins to rewire the mitochondrial proteome. Catalyzes degradation of mitochondrial proteins, such as translocases, lipid transfer proteins and metabolic enzymes in response to nutrient starvation in order to limit mitochondrial biogenesis: mechanistically, YME1L is activated by decreased phosphatidylethanolamine levels caused by LPIN1 activity in response to mTORC1 inhibition. Acts as a regulator of adult neural stem cell self-renewal by promoting mitochondrial proteome rewiring, preserving neural stem and progenitor cells self-renewal. Required for normal, constitutive degradation of PRELID1. Catalyzes the degradation of OMA1 in response to membrane depolarization. Mediates degradation of TIMM17A downstream of the integrated stress response (ISR). Catalyzes degradation of MICU1 when MICU1 is not assembled via an interchain disulfide. The protein is ATP-dependent zinc metalloprotease YME1L1 (YME1L1) of Homo sapiens (Human).